The following is a 293-amino-acid chain: Movement protein BC1 (293 aa).

It belongs to the begomovirus movement protein BC1 family. Binds to dimeric supercoiled plasmid DNA. In terms of processing, phosphorylated.

Its subcellular location is the host cell membrane. It localises to the host microsome membrane. It is found in the host endoplasmic reticulum membrane. Its function is as follows. Transports viral genome to neighboring plant cells directly through plasmosdesmata, without any budding. The movement protein allows efficient cell to cell propagation, by bypassing the host cell wall barrier. Begomovirus genome is shuttled out of nucleus by Nuclear shuttle protein (NSP) and the movement protein transports the DNA-NSP complex to cell plasmodesmata and facilitates further movement across the cell wall. The protein is Movement protein BC1 of Macroptilium lathyroides (Lima bean).